The sequence spans 335 residues: Pregnancy-specific beta-1-glycoprotein 5 (335 aa).

An N-terminal signal peptide occupies residues 1-34; it reads MGPLSAPPCTQHITWKGLLLTASLLNFWNLPITA. The region spanning 35-144 is the Ig-like V-type domain; it reads QVTIEALPPK…TGYFTFNLYL (110 aa). Asn-104 and Asn-111 each carry an N-linked (GlcNAc...) asparagine glycan. The Cell attachment site signature appears at 127-129; that stretch reads RGD. Ig-like C2-type domains lie at 147-234 and 239-317; these read PKPY…VTLN and PDLP…KSMT. 2 disulfides stabilise this stretch: Cys-169/Cys-217 and Cys-261/Cys-301. N-linked (GlcNAc...) asparagine glycans are attached at residues Asn-175 and Asn-210.

It belongs to the immunoglobulin superfamily. CEA family. Synthesized by syncytiotrophoblast of the placenta.

It localises to the secreted. The polypeptide is Pregnancy-specific beta-1-glycoprotein 5 (PSG5) (Homo sapiens (Human)).